Reading from the N-terminus, the 433-residue chain is Glutamate-1-semialdehyde 2,1-aminomutase (433 aa).

Lysine 272 carries the post-translational modification N6-(pyridoxal phosphate)lysine.

Belongs to the class-III pyridoxal-phosphate-dependent aminotransferase family. HemL subfamily. As to quaternary structure, homodimer. The cofactor is pyridoxal 5'-phosphate.

It localises to the cytoplasm. It catalyses the reaction (S)-4-amino-5-oxopentanoate = 5-aminolevulinate. It functions in the pathway porphyrin-containing compound metabolism; protoporphyrin-IX biosynthesis; 5-aminolevulinate from L-glutamyl-tRNA(Glu): step 2/2. This is Glutamate-1-semialdehyde 2,1-aminomutase from Magnetococcus marinus (strain ATCC BAA-1437 / JCM 17883 / MC-1).